Reading from the N-terminus, the 177-residue chain is Large ribosomal subunit protein uL6 (177 aa).

The protein belongs to the universal ribosomal protein uL6 family. In terms of assembly, part of the 50S ribosomal subunit.

Functionally, this protein binds to the 23S rRNA, and is important in its secondary structure. It is located near the subunit interface in the base of the L7/L12 stalk, and near the tRNA binding site of the peptidyltransferase center. The polypeptide is Large ribosomal subunit protein uL6 (Xanthobacter autotrophicus (strain ATCC BAA-1158 / Py2)).